Here is a 175-residue protein sequence, read N- to C-terminus: Bcl-2-related protein A1 (175 aa).

Belongs to the Bcl-2 family. In terms of assembly, interacts directly with BCL2L11/BIM, BAK1, BID, BMF and BBC3. Interacts directly with PMAIP1. Interacts with BOP. Interacts with ING4. Interacts with UBQLN4.

Its subcellular location is the cytoplasm. Retards apoptosis induced by IL-3 deprivation. May function in the response of hemopoietic cells to external signals and in maintaining endothelial survival during infection. Can inhibit apoptosis induced by serum starvation in the mammary epithelial cell line HC11. This is Bcl-2-related protein A1 (BCL2A1) from Bos taurus (Bovine).